The chain runs to 612 residues: MDDHKPIETPDGPAVDTPGIGARRYETPPTELPITEAEAARAAGLAHNEHLKIASGYLRGGLADGLLKHATGAISEDDGQLVKFHGMYMQDDRDIRAERTKKKLEKAYSFMIRLRIAGGVVTPKQWLILDNIATTYAGSALRATTRQTFQYHGVIKSNLKRTMAAIDSALLDTIAACGDVNRNVMAATNPAQAGAHKIALQLAKDISDTLLPKTGAWREIWLDGERVVGGEDAAEVEPVYGKTYLPRKFKTVVAVPPSNEVDIFAHDLGFIAILDKKNRVTGWNVTVGGGMGMTHGESDTFPRTADVLGFVQPEDALKAAEAVMTVQRDWGNRKNRKNARLKYTIERFGLDAFRAEVEKRIGKKLGAPKPFTFDGNGDRYGWVEGEDGRHHLTLYVPSGRIKDIEGGPQFLSGLRRIAEVHEGDFRLTGNQNVIIANVPAGKRAEIDALVDEYGLTRGASALRRNSMACVALPTCGLALAESERYLPDLLSELEESLARHGLQDEPITIRSTGCPNGCARPFISEIGLVGRGPERYHLYLGAAFDGSRLSKLYREDVTASEIKGTLDPLFAAYAKDRQPGEHFGDFVIRAGFVAKTSNGPDFHERTGPLRAA.

The disordered stretch occupies residues 1 to 26 (MDDHKPIETPDGPAVDTPGIGARRYE). Residues Cys469, Cys475, Cys514, and Cys518 each contribute to the [4Fe-4S] cluster site. Siroheme is bound at residue Cys518.

Belongs to the nitrite and sulfite reductase 4Fe-4S domain family. In terms of assembly, alpha(8)-beta(8). The alpha component is a flavoprotein, the beta component is a hemoprotein. Requires siroheme as cofactor. [4Fe-4S] cluster is required as a cofactor.

The enzyme catalyses hydrogen sulfide + 3 NADP(+) + 3 H2O = sulfite + 3 NADPH + 4 H(+). It participates in sulfur metabolism; hydrogen sulfide biosynthesis; hydrogen sulfide from sulfite (NADPH route): step 1/1. Functionally, component of the sulfite reductase complex that catalyzes the 6-electron reduction of sulfite to sulfide. This is one of several activities required for the biosynthesis of L-cysteine from sulfate. The chain is Sulfite reductase [NADPH] hemoprotein beta-component from Methylorubrum extorquens (strain ATCC 14718 / DSM 1338 / JCM 2805 / NCIMB 9133 / AM1) (Methylobacterium extorquens).